Consider the following 385-residue polypeptide: Putative mitochondrial carrier protein TRV_02148.2 (385 aa).

Solcar repeat units follow at residues 24 to 124 and 130 to 210; these read SNTL…LHAR and RTAG…LRRR. 5 helical membrane passes run 30 to 47, 132 to 150, 184 to 207, 263 to 279, and 294 to 310; these read GTAIALSTALLHPLDSIL, AGNELLLSLVSMAFVKLFT, WSAYGATLVLCVRSCVLPVVYLAL, YTICVLMVCLGLLLEVI, and VVTVAMMRLSAVMLYML.

This sequence belongs to the mitochondrial carrier (TC 2.A.29) family.

Its subcellular location is the mitochondrion inner membrane. Its function is as follows. May function as a mitochondrial transporter. This Trichophyton verrucosum (strain HKI 0517) protein is Putative mitochondrial carrier protein TRV_02148.2.